The following is a 537-amino-acid chain: Protein disulfide isomerase-like 1-5 (537 aa).

A signal peptide spans 1-29 (MSLIPKPISKVSTFTFILLILLSFTIIIA). The 127-residue stretch at 58–184 (LQEDRPEQQS…IVIWVQKKTG (127 aa)) folds into the Thioredoxin 1 domain. Residue Cys106 is the Nucleophile of the active site. Residues Asn160, Asn364, and Asn416 are each glycosylated (N-linked (GlcNAc...) asparagine). In terms of domain architecture, Thioredoxin 2 spans 380–526 (LLESDPSPNS…IAVFINEELL (147 aa)). Residues Cys447 and Cys450 each act as nucleophile in the active site. A disulfide bridge links Cys447 with Cys450. An N-linked (GlcNAc...) asparagine glycan is attached at Asn530. A Prevents secretion from ER motif is present at residues 534–537 (KDEL).

Belongs to the protein disulfide isomerase family. Widely expressed.

It localises to the endoplasmic reticulum lumen. The catalysed reaction is Catalyzes the rearrangement of -S-S- bonds in proteins.. In terms of biological role, acts as a protein-folding catalyst that interacts with nascent polypeptides to catalyze the formation, isomerization, and reduction or oxidation of disulfide bonds. This chain is Protein disulfide isomerase-like 1-5 (PDIL1-5), found in Arabidopsis thaliana (Mouse-ear cress).